The primary structure comprises 162 residues: Endoribonuclease YbeY (162 aa).

His-128, His-132, and His-138 together coordinate Zn(2+).

The protein belongs to the endoribonuclease YbeY family. Zn(2+) serves as cofactor.

Its subcellular location is the cytoplasm. Its function is as follows. Single strand-specific metallo-endoribonuclease involved in late-stage 70S ribosome quality control and in maturation of the 3' terminus of the 16S rRNA. This is Endoribonuclease YbeY from Lactococcus lactis subsp. cremoris (strain SK11).